The following is a 227-amino-acid chain: MNNFPEIFDDESTCDYDKEIDHQELSDTFWCLMDFISSKHGKSVADINSGMNTLINIRKSLNGSGKVVSITDSYNKTYFHSQRGLTNVDSRINIDILKIDFISIIDDLQIIFRGLIYKDKGFLDSADLLDLDKKTTTRKFQEYFNILKIKIIEKIGMTKTFHFNIDFRNTISPLDKQRKCSISSSHKKTNRLNDLNNYITYLNDNIVLTFRWKGVGFGGLSLNDIKI.

Self-associates.

Its subcellular location is the host cell junction. It localises to the host plasmodesma. This chain is Protein p26, found in Lettuce infectious yellows virus (isolate United States/92) (LIYV).